A 174-amino-acid polypeptide reads, in one-letter code: 2-oxo-4-hydroxy-4-carboxy-5-ureidoimidazoline decarboxylase (174 aa).

The active-site Proton donor is H67. Residues P68, 84–88, and 119–123 each bind substrate; these read SQEEQ and FVICA. Residues 172 to 174 carry the Microbody targeting signal motif; it reads TKL.

Belongs to the OHCU decarboxylase family. Homodimer.

It is found in the peroxisome. The catalysed reaction is 5-hydroxy-2-oxo-4-ureido-2,5-dihydro-1H-imidazole-5-carboxylate + H(+) = (S)-allantoin + CO2. Its pathway is purine metabolism; urate degradation; (S)-allantoin from urate: step 3/3. Its function is as follows. Catalyzes the stereoselective decarboxylation of 2-oxo-4-hydroxy-4-carboxy-5-ureidoimidazoline (OHCU) to (S)-allantoin. This Danio rerio (Zebrafish) protein is 2-oxo-4-hydroxy-4-carboxy-5-ureidoimidazoline decarboxylase (urad).